A 189-amino-acid polypeptide reads, in one-letter code: Batroxicidin (189 aa).

An N-terminal signal peptide occupies residues 1-22 (MQGFFWKTWLVVALCGTSSSLA). A propeptide spanning residues 23 to 155 (HRPLSYGEAL…DEEKDRPKRV (133 aa)) is cleaved from the precursor. Intrachain disulfides connect cysteine 79/cysteine 90 and cysteine 101/cysteine 118. Acidic residues predominate over residues 125–148 (EEEEEDEEEQKAEVEKDEEKEDEE). Residues 125–152 (EEEEEDEEEQKAEVEKDEEKEDEEKDRP) form a disordered region.

The protein belongs to the cathelicidin family. As to expression, expressed by the venom gland.

It localises to the secreted. Its subcellular location is the target cell membrane. Functionally, potent antimicrobial peptide against Gram-negative (MIC=0.25 ug/ml against E.coli ATCC 25922, MIC=1 ug/ml against P.aeruginosa) and Gram-positive bacteria (MIC=32 ug/ml against E.faecalis, MIC=32 ug/ml against S.aureus). Adopts an amphipathic alpha helical conformation, that may allow to partition into the target membrane. Low hemolytic activities have been observed on mammalian cells. In addition, when tested in vitro on the parasite Trypanosoma cruzi (responsible of the Chagas disease), is able to reduce the number of the three forms (epimastigote, trypomastigote and amastigote) by inducing cell death through necrosis. The chain is Batroxicidin from Bothrops atrox (Barba amarilla).